We begin with the raw amino-acid sequence, 465 residues long: Probable Xaa-Pro aminopeptidase pepP (465 aa).

Mn(2+) is bound by residues aspartate 261, aspartate 272, glutamate 395, and glutamate 435.

This sequence belongs to the peptidase M24B family. Requires Mn(2+) as cofactor.

It carries out the reaction Release of any N-terminal amino acid, including proline, that is linked to proline, even from a dipeptide or tripeptide.. Its function is as follows. Catalyzes the removal of a penultimate prolyl residue from the N-termini of peptides. This is Probable Xaa-Pro aminopeptidase pepP (pepP) from Talaromyces marneffei (strain ATCC 18224 / CBS 334.59 / QM 7333) (Penicillium marneffei).